Consider the following 359-residue polypeptide: MNMTFRWYGRGNDTVTLEYVKQIPGVKGIVWALHQKPVGDVWEKEEIRAETEYIQSYGFHAEVVESVNVHEAIKLGNEERGRYIENYKQTIRNLAGFGVKVICYNFMPVFDWTRTDMFRPLEDGSTALFFEKAKVESLDPQELIRTVEEASDMTLPGWEPEKLARIKELFAAYRTVDEEKLWDNLSFFLQEILPVAEAYGVQMAIHPDDPPWPIFGLPRIITGEASYKKLRAISDSPSNCITLCTGSMGANPANDMVEIAKTYAGIAPFSHIRNVKIYENGDFIETSHLTKDGSINIQGVMEELHKQDYEGYVRPDHGRHLWGEQCRPGYGLYDRALGIMYLNGLWDAYEAMAKKEVGI.

Belongs to the mannonate dehydratase family. It depends on Fe(2+) as a cofactor. Mn(2+) is required as a cofactor.

The catalysed reaction is D-mannonate = 2-dehydro-3-deoxy-D-gluconate + H2O. It functions in the pathway carbohydrate metabolism; pentose and glucuronate interconversion. Functionally, catalyzes the dehydration of D-mannonate. In Bacillus subtilis (strain 168), this protein is Mannonate dehydratase (uxuA).